We begin with the raw amino-acid sequence, 464 residues long: Glutamate--tRNA ligase (464 aa).

Residues 9–19 carry the 'HIGH' region motif; the sequence is PSPTGYLHIGG. Positions 242–246 match the 'KMSKS' region motif; the sequence is KISKR. Lys245 contributes to the ATP binding site.

Belongs to the class-I aminoacyl-tRNA synthetase family. Glutamate--tRNA ligase type 1 subfamily. As to quaternary structure, monomer.

The protein resides in the cytoplasm. It carries out the reaction tRNA(Glu) + L-glutamate + ATP = L-glutamyl-tRNA(Glu) + AMP + diphosphate. In terms of biological role, catalyzes the attachment of glutamate to tRNA(Glu) in a two-step reaction: glutamate is first activated by ATP to form Glu-AMP and then transferred to the acceptor end of tRNA(Glu). The sequence is that of Glutamate--tRNA ligase from Neisseria meningitidis serogroup A / serotype 4A (strain DSM 15465 / Z2491).